A 473-amino-acid chain; its full sequence is MNKKIYTQVVVIGSGPAGYSAAFRCADLGLDTVLIERYDKLGGVCLNVGCIPSKTLLHIAKVIKEAKELHKTGVSFNKPDIDIKKIKNWKQHIVNKLTDGLSSMRKKRKIRIFQGHAIFETDKSLCVTNTEDKFTIFFDNAIIATGSKPIKIPSIPHDDIRIWDSTDALSLKKIPNNFLIIGSGIIGLEMATIYSALGSKVDIIDRFNHFLPVIDEDISSIYKKSINQQFNLMLNTHIDKVEVKKDALIVDMIHENIPKKNILYDAVLVAIGRTPNIDSLGLDRIGLKINNFGFIQVNNQLKTNIPHIYAIGDVAGTPMLAHKGVHEGHIAAEVISGKNHYFEPKVIPSIAYTDPEIAWVGLSEKEAKQENINYEVAIFPWNASGRAIASNCSIGKTKLIFNKQNNKIIGGSIVGSNAGELIGEVGLAIEMGCDAEDIALTIHAHPTLSESIGLSAEVFQGTVTDVLNFKLNK.

Residues 36 to 45 (ERYDKLGGVC), Lys-54, and Ala-117 each bind FAD. A disulfide bond links Cys-45 and Cys-50. Residues 182–186 (GSGII), Asp-205, and 270–273 (AIGR) each bind NAD(+). Positions 313 and 321 each coordinate FAD. The Proton acceptor role is filled by His-445.

Belongs to the class-I pyridine nucleotide-disulfide oxidoreductase family. In terms of assembly, homodimer. Requires FAD as cofactor.

The protein localises to the cytoplasm. The catalysed reaction is N(6)-[(R)-dihydrolipoyl]-L-lysyl-[protein] + NAD(+) = N(6)-[(R)-lipoyl]-L-lysyl-[protein] + NADH + H(+). Functionally, lipoamide dehydrogenase is a component of the alpha-ketoacid dehydrogenase complexes. This Buchnera aphidicola subsp. Acyrthosiphon pisum (strain APS) (Acyrthosiphon pisum symbiotic bacterium) protein is Dihydrolipoyl dehydrogenase (lpdA).